A 474-amino-acid polypeptide reads, in one-letter code: Aspartyl/glutamyl-tRNA(Asn/Gln) amidotransferase subunit B (474 aa).

It belongs to the GatB/GatE family. GatB subfamily. As to quaternary structure, heterotrimer of A, B and C subunits.

It catalyses the reaction L-glutamyl-tRNA(Gln) + L-glutamine + ATP + H2O = L-glutaminyl-tRNA(Gln) + L-glutamate + ADP + phosphate + H(+). The catalysed reaction is L-aspartyl-tRNA(Asn) + L-glutamine + ATP + H2O = L-asparaginyl-tRNA(Asn) + L-glutamate + ADP + phosphate + 2 H(+). Its function is as follows. Allows the formation of correctly charged Asn-tRNA(Asn) or Gln-tRNA(Gln) through the transamidation of misacylated Asp-tRNA(Asn) or Glu-tRNA(Gln) in organisms which lack either or both of asparaginyl-tRNA or glutaminyl-tRNA synthetases. The reaction takes place in the presence of glutamine and ATP through an activated phospho-Asp-tRNA(Asn) or phospho-Glu-tRNA(Gln). The protein is Aspartyl/glutamyl-tRNA(Asn/Gln) amidotransferase subunit B of Campylobacter curvus (strain 525.92).